Here is a 347-residue protein sequence, read N- to C-terminus: Histidinol-phosphate aminotransferase (347 aa).

Lys209 carries the N6-(pyridoxal phosphate)lysine modification.

The protein belongs to the class-II pyridoxal-phosphate-dependent aminotransferase family. Histidinol-phosphate aminotransferase subfamily. As to quaternary structure, homodimer. Pyridoxal 5'-phosphate is required as a cofactor.

It carries out the reaction L-histidinol phosphate + 2-oxoglutarate = 3-(imidazol-4-yl)-2-oxopropyl phosphate + L-glutamate. Its pathway is amino-acid biosynthesis; L-histidine biosynthesis; L-histidine from 5-phospho-alpha-D-ribose 1-diphosphate: step 7/9. The polypeptide is Histidinol-phosphate aminotransferase (Geotalea daltonii (strain DSM 22248 / JCM 15807 / FRC-32) (Geobacter daltonii)).